A 459-amino-acid polypeptide reads, in one-letter code: Trigger factor (459 aa).

Residues 166–245 (GDFANIDLTA…VNSVKAEELP (80 aa)) enclose the PPIase FKBP-type domain.

It belongs to the FKBP-type PPIase family. Tig subfamily.

The protein localises to the cytoplasm. It catalyses the reaction [protein]-peptidylproline (omega=180) = [protein]-peptidylproline (omega=0). Involved in protein export. Acts as a chaperone by maintaining the newly synthesized protein in an open conformation. Functions as a peptidyl-prolyl cis-trans isomerase. This chain is Trigger factor, found in Bifidobacterium longum subsp. infantis (strain ATCC 15697 / DSM 20088 / JCM 1222 / NCTC 11817 / S12).